We begin with the raw amino-acid sequence, 423 residues long: MSERTVTVSQLTNYLKNLLLQDHNLKNVLVRGEISNFKHHSSGHMYFTLKDEGASLRCVMFRNRNWNLDFSPQDGMDVIVQGVVGIFERAGLYQLYVEKMYSHGLGSLHLAFEQLKEKLAEEGIFNEEYKKTLPPFPKKIAVVTSPTGAAVRDMIVTISRRFPLTSILLIPVRVQGEYAASEIRAGIDYANSIDDIDVILVGRGGGSLEEIWPFNTEEVARAIFSSKAPVISCVGHETDFTISDFVSDLRAPTPTAAAELVVPDQVELKRQVSDYKHRLTKALYHKYRNLDQRVVELLDRPVMKNPYTLISERKKELEYLDQRLLREVYHLFKLKRNKYSSLVEQLDSLSPLKTLGRGYTFCQTHDGDIVRSVTDIEQEDILKLTFFDGSAKCLVKEKQEHHISEDHSNLNSLCNEEEDYDRQ.

The protein belongs to the XseA family. Heterooligomer composed of large and small subunits.

It localises to the cytoplasm. It catalyses the reaction Exonucleolytic cleavage in either 5'- to 3'- or 3'- to 5'-direction to yield nucleoside 5'-phosphates.. Bidirectionally degrades single-stranded DNA into large acid-insoluble oligonucleotides, which are then degraded further into small acid-soluble oligonucleotides. This chain is Exodeoxyribonuclease 7 large subunit, found in Natranaerobius thermophilus (strain ATCC BAA-1301 / DSM 18059 / JW/NM-WN-LF).